The chain runs to 791 residues: Protein Rf1, mitochondrial (791 aa).

Residues 1–27 (MARRAASRAVGALRSDGSIQGRGGRAG) constitute a mitochondrion transit peptide. Positions 1 to 31 (MARRAASRAVGALRSDGSIQGRGGRAGGSGA) are disordered. The segment covering 20-30 (QGRGGRAGGSG) has biased composition (gly residues). PPR repeat units follow at residues 86 to 120 (DLCT…GFRV), 121 to 156 (DAIA…GCIP), 157 to 194 (NVFS…GSPP), 195 to 229 (DVVS…GILP), 230 to 264 (DVVT…GVMP), 265 to 299 (DCMT…GVEP), 300 to 334 (DVVT…GLKP), 335 to 369 (EITT…GIHP), 370 to 404 (DHYV…GLNP), 405 to 439 (NAVT…GLSP), 440 to 474 (GNIV…GICL), 475 to 509 (NTIF…GVKP), 510 to 544 (NVIT…GLKP), 545 to 579 (NTVT…GVSP), 580 to 614 (DIIT…GTQI), 615 to 649 (ELST…DLKL), 650 to 684 (EART…GLVP), 685 to 719 (NYWT…GCTV), and 720 to 754 (DSGM…HFSL).

The protein localises to the mitochondrion. Reduces the expression of the cytoplasmic male sterility (CMS)-associated mitochondrial gene ORF79, encoding a cytotoxic peptide. Can restore male fertility by blocking ORF79 production via endonucleolytic cleavage of dicistronic ATP6/ORF79 mRNA. Promotes the editing of ATP6 mRNAs independently of its cleavage function. This is Protein Rf1, mitochondrial (Rf1) from Oryza sativa subsp. indica (Rice).